We begin with the raw amino-acid sequence, 159 residues long: 4-deoxy-4-sulfo-D-erythrose isomerase (159 aa).

Cys66 acts as the Proton acceptor in catalysis.

The protein belongs to the LacAB/RpiB family.

It catalyses the reaction 4-deoxy-4-sulfo-D-erythrose = 4-deoxy-4-sulfo-D-erythrulose. Functionally, part of the sulfo-TK pathway, a D-sulfoquinovose degradation pathway that produces 2-hydroxyethane-1-sulfonate (isethionate). Catalyzes the isomerization of 4-deoxy-4-sulfo-D-erythrose (SE) to 4-deoxy-4-sulfo-D-erythrulose (SEu). This is 4-deoxy-4-sulfo-D-erythrose isomerase from Clostridium sp. (strain MSTE9).